A 174-amino-acid polypeptide reads, in one-letter code: uncharacterized protein (174 aa).

It belongs to the mimivirus L39/R874 family.

This is an uncharacterized protein from Acanthamoeba polyphaga (Amoeba).